The primary structure comprises 172 residues: Endoribonuclease YbeY (172 aa).

Residues His-137, His-141, and His-147 each contribute to the Zn(2+) site.

This sequence belongs to the endoribonuclease YbeY family. Zn(2+) serves as cofactor.

The protein localises to the cytoplasm. Functionally, single strand-specific metallo-endoribonuclease involved in late-stage 70S ribosome quality control and in maturation of the 3' terminus of the 16S rRNA. This Dehalococcoides mccartyi (strain ATCC BAA-2266 / KCTC 15142 / 195) (Dehalococcoides ethenogenes (strain 195)) protein is Endoribonuclease YbeY.